The primary structure comprises 691 residues: Lacticin-481/lactococcin-DR transport/processing ATP-binding protein lcnDR3 (691 aa).

One can recognise a Peptidase C39 domain in the interval 6–130; the sequence is QNNEQDCLLA…KKFSGYIITL (125 aa). The active site involves C12. In terms of domain architecture, ABC transmembrane type-1 spans 158 to 434; sequence TFLYIFSLFI…IQDVMFEISR (277 aa). 5 consecutive transmembrane segments (helical) span residues 159–179, 189–209, 262–284, 289–311, and 385–405; these read FLYIFSLFISQIVALWFSIIL, ITYSFIMMISLVLFQTLSLLM, GILLKIFPSLLNFFTVFIVIIYL, FTLTLFLVIMNLLYMIFSFSLIS, and ICVILMMIFGIYLNQGNLVSI. In terms of domain architecture, ABC transporter spans 464–689; the sequence is IILKDISYSY…LLNDSYNSFV (226 aa). 497–504 contributes to the ATP binding site; it reads GKSGSGKS.

It belongs to the ABC transporter superfamily.

Its subcellular location is the cell membrane. Its function is as follows. Probably implicated in the export process of the lantibiotic lacticin-481/lactococcin-DR. In Lactococcus lactis subsp. lactis (Streptococcus lactis), this protein is Lacticin-481/lactococcin-DR transport/processing ATP-binding protein lcnDR3 (lcnDR3).